Reading from the N-terminus, the 889-residue chain is Exocyst complex component 1 (889 aa).

Phosphoserine is present on residues S145 and S148. The stretch at 156-269 forms a coiled coil; that stretch reads RAVQKTQHMD…GHVKETMEKI (114 aa). S456 is subject to Phosphoserine.

It belongs to the SEC3 family. In terms of assembly, the exocyst complex is composed of Sec3/Exoc1, Sec5/Exoc2, Sec6/Exoc3, Sec8/Exoc4, Sec10/Exoc5, Sec15/Exoc6, Exo70/Exoc7 and Exo84/Exoc8.

Its function is as follows. Component of the exocyst complex involved in the docking of exocytic vesicles with fusion sites on the plasma membrane. This Drosophila melanogaster (Fruit fly) protein is Exocyst complex component 1.